A 216-amino-acid chain; its full sequence is Maleylacetoacetate isomerase (216 aa).

Methionine 1 carries the post-translational modification N-acetylmethionine. In terms of domain architecture, GST N-terminal spans 4-87 (GKPVLYSYFR…YLEETRPIPR (84 aa)). Glutathione contacts are provided by residues 14–19 (SSCSWR) and glutamine 45. Lysine 57 is modified (N6-succinyllysine). Glutathione-binding positions include valine 59, 71-72 (QS), glutamine 111, and 115-117 (NLS). The 121-residue stretch at 92 to 212 (DPQKRAIVRM…HPCRQPDTPA (121 aa)) folds into the GST C-terminal domain. Threonine 136 carries the phosphothreonine modification. Serine 137 is modified (phosphoserine). At lysine 177 the chain carries N6-succinyllysine. A Phosphoserine modification is found at serine 181.

This sequence belongs to the GST superfamily. Zeta family. In terms of assembly, homodimer. Requires glutathione as cofactor. The N-terminus is blocked.

The protein resides in the cytoplasm. The enzyme catalyses 4-maleylacetoacetate = 4-fumarylacetoacetate. The catalysed reaction is RX + glutathione = an S-substituted glutathione + a halide anion + H(+). The protein operates within amino-acid degradation; L-phenylalanine degradation; acetoacetate and fumarate from L-phenylalanine: step 5/6. Probable bifunctional enzyme showing minimal glutathione-conjugating activity with ethacrynic acid and 7-chloro-4-nitrobenz-2-oxa-1, 3-diazole and maleylacetoacetate isomerase activity. Also has low glutathione peroxidase activity with t-butyl and cumene hydroperoxides. Is able to catalyze the glutathione dependent oxygenation of dichloroacetic acid to glyoxylic acid. The chain is Maleylacetoacetate isomerase (Gstz1) from Rattus norvegicus (Rat).